The following is a 546-amino-acid chain: Chaperonin GroEL (546 aa).

Residues 29–32, K50, 86–90, G414, and D492 contribute to the ATP site; these read TMGP and DGTTT.

Belongs to the chaperonin (HSP60) family. In terms of assembly, forms a cylinder of 14 subunits composed of two heptameric rings stacked back-to-back. Interacts with the co-chaperonin GroES.

The protein localises to the cytoplasm. It carries out the reaction ATP + H2O + a folded polypeptide = ADP + phosphate + an unfolded polypeptide.. Its function is as follows. Together with its co-chaperonin GroES, plays an essential role in assisting protein folding. The GroEL-GroES system forms a nano-cage that allows encapsulation of the non-native substrate proteins and provides a physical environment optimized to promote and accelerate protein folding. The sequence is that of Chaperonin GroEL from Helicobacter pylori (strain G27).